The primary structure comprises 385 residues: Cyclin-A3-2 (385 aa).

The interval 1–110 (MADKENSTPA…STSTASPSSG (110 aa)) is disordered. Low complexity-rich tracts occupy residues 7–41 (STPASAARLTRSSAAAGAQAKRSAAAGVADGGAPP), 74–88 (PSSKQPEPAAEAAAP), and 96–110 (PVSSASTSTASPSSG).

The protein belongs to the cyclin family. Cyclin AB subfamily.

The protein is Cyclin-A3-2 (CYCA3-2) of Oryza sativa subsp. japonica (Rice).